The chain runs to 305 residues: UDP-3-O-acyl-N-acetylglucosamine deacetylase (305 aa).

Zn(2+)-binding residues include histidine 79, histidine 238, and aspartate 242. Histidine 265 (proton donor) is an active-site residue.

It belongs to the LpxC family. It depends on Zn(2+) as a cofactor.

It carries out the reaction a UDP-3-O-[(3R)-3-hydroxyacyl]-N-acetyl-alpha-D-glucosamine + H2O = a UDP-3-O-[(3R)-3-hydroxyacyl]-alpha-D-glucosamine + acetate. It participates in glycolipid biosynthesis; lipid IV(A) biosynthesis; lipid IV(A) from (3R)-3-hydroxytetradecanoyl-[acyl-carrier-protein] and UDP-N-acetyl-alpha-D-glucosamine: step 2/6. Catalyzes the hydrolysis of UDP-3-O-myristoyl-N-acetylglucosamine to form UDP-3-O-myristoylglucosamine and acetate, the committed step in lipid A biosynthesis. This is UDP-3-O-acyl-N-acetylglucosamine deacetylase from Erwinia tasmaniensis (strain DSM 17950 / CFBP 7177 / CIP 109463 / NCPPB 4357 / Et1/99).